The primary structure comprises 190 residues: Major sperm protein 32 (190 aa).

Residues 72–189 (MIQTQPGTKI…RRKNLPIEYN (118 aa)) enclose the MSP domain.

Sperm.

It is found in the cell projection. The protein localises to the pseudopodium. Its subcellular location is the cytoplasm. It localises to the cytoskeleton. Central component in molecular interactions underlying sperm crawling. Forms an extensive filament system that extends from sperm villipoda, along the leading edge of the pseudopod. The sequence is that of Major sperm protein 32 (msp-32) from Caenorhabditis elegans.